Consider the following 312-residue polypeptide: MRLVFAGTPEFARIALDALLAAGHDVPLVLTQPDRPAGRGLKLTPSPVKQAALAAGIGVAQPRSLRLDGRYPDEAAAARAQLERVAPDVMVVAAYGLILPQWTLDLPRLGCLNIHASLLPRWRGAAPIQRAIEAGDAETGVTIMQMDAGLDTGDMLLERAVPIGAQQTAAQLHDELALAGGQAIVDALAALGQGGLAPRRQPDAGVTYAAKLDKAEAALDCSLPAAVLARRVRAFNPVPGATIRLPGLDDPVKVWRAQALEQAAGGPPGAVLRADAQGIDIATGQGVLRLLELQKAGGKRQPVDVFVRGWQP.

117-120 (SLLP) is a (6S)-5,6,7,8-tetrahydrofolate binding site.

This sequence belongs to the Fmt family.

It carries out the reaction L-methionyl-tRNA(fMet) + (6R)-10-formyltetrahydrofolate = N-formyl-L-methionyl-tRNA(fMet) + (6S)-5,6,7,8-tetrahydrofolate + H(+). In terms of biological role, attaches a formyl group to the free amino group of methionyl-tRNA(fMet). The formyl group appears to play a dual role in the initiator identity of N-formylmethionyl-tRNA by promoting its recognition by IF2 and preventing the misappropriation of this tRNA by the elongation apparatus. The sequence is that of Methionyl-tRNA formyltransferase from Bordetella parapertussis (strain 12822 / ATCC BAA-587 / NCTC 13253).